The following is a 181-amino-acid chain: uncharacterized protein (181 aa).

Belongs to the methyltransferase superfamily.

This is an uncharacterized protein from Bacillus subtilis (strain 168).